Consider the following 620-residue polypeptide: uncharacterized protein (620 aa).

It belongs to the chlamydial CPn_0512/CT_425/TC_0708 family.

This is an uncharacterized protein from Chlamydia pneumoniae (Chlamydophila pneumoniae).